The chain runs to 470 residues: Histone deacetylase HOS1 (470 aa).

The tract at residues 47 to 392 is histone deacetylase; that stretch reads LTFPYARKDD…YTYLTWCVTK (346 aa). Residue S110 is modified to Phosphoserine. Residue H211 is part of the active site.

Belongs to the histone deacetylase family. HD type 1 subfamily.

The protein localises to the nucleus. The enzyme catalyses N(6)-acetyl-L-lysyl-[histone] + H2O = L-lysyl-[histone] + acetate. Functionally, responsible for the deacetylation of lysine residues on the N-terminal part of the core histones (H2A, H2B, H3 and H4). Histone deacetylation plays an important role in transcriptional regulation, cell cycle progression and developmental events. Histone deacetylases act via the formation of large multiprotein complexes. This chain is Histone deacetylase HOS1 (HOS1), found in Saccharomyces cerevisiae (strain ATCC 204508 / S288c) (Baker's yeast).